The sequence spans 251 residues: Flap endonuclease Xni (251 aa).

A Mg(2+)-binding site is contributed by D104. The 5'-3' exonuclease domain occupies 160–250 (VLPRQLPDYW…SGNLQQLRLK (91 aa)). K(+)-binding residues include L171, A172, P180, V182, and V185. The interaction with DNA stretch occupies residues 184 to 189 (GVGAKT).

It belongs to the Xni family. Mg(2+) serves as cofactor. It depends on K(+) as a cofactor.

Has flap endonuclease activity. During DNA replication, flap endonucleases cleave the 5'-overhanging flap structure that is generated by displacement synthesis when DNA polymerase encounters the 5'-end of a downstream Okazaki fragment. The protein is Flap endonuclease Xni of Yersinia pestis bv. Antiqua (strain Nepal516).